We begin with the raw amino-acid sequence, 236 residues long: Transcriptional regulatory protein RprY (236 aa).

The region spanning R9–L123 is the Response regulatory domain. D58 carries the post-translational modification 4-aspartylphosphate. Residues S134–T231 constitute a DNA-binding region (ompR/PhoB-type).

In terms of processing, phosphorylated by RprX.

It is found in the cytoplasm. Member of the two-component regulatory system RprX/RprY. In Bacteroides fragilis (strain YCH46), this protein is Transcriptional regulatory protein RprY (rprY).